Consider the following 138-residue polypeptide: Large ribosomal subunit protein uL16 (138 aa).

This sequence belongs to the universal ribosomal protein uL16 family. As to quaternary structure, part of the 50S ribosomal subunit.

In terms of biological role, binds 23S rRNA and is also seen to make contacts with the A and possibly P site tRNAs. The protein is Large ribosomal subunit protein uL16 of Acholeplasma laidlawii (strain PG-8A).